Reading from the N-terminus, the 876-residue chain is Valine--tRNA ligase (876 aa).

Residues 43–53 (PNVTGVLHMGH) carry the 'HIGH' region motif. Positions 534 to 538 (KMSKS) match the 'KMSKS' region motif. Lys537 provides a ligand contact to ATP. Positions 847-876 (PEKVVAIEKAKKADAEAKIEALKASLKSLS) form a coiled coil.

The protein belongs to the class-I aminoacyl-tRNA synthetase family. ValS type 1 subfamily. In terms of assembly, monomer.

The protein localises to the cytoplasm. The enzyme catalyses tRNA(Val) + L-valine + ATP = L-valyl-tRNA(Val) + AMP + diphosphate. Functionally, catalyzes the attachment of valine to tRNA(Val). As ValRS can inadvertently accommodate and process structurally similar amino acids such as threonine, to avoid such errors, it has a 'posttransfer' editing activity that hydrolyzes mischarged Thr-tRNA(Val) in a tRNA-dependent manner. This chain is Valine--tRNA ligase, found in Christiangramia forsetii (strain DSM 17595 / CGMCC 1.15422 / KT0803) (Gramella forsetii).